The chain runs to 37 residues: Large ribosomal subunit protein bL36 (37 aa).

The protein belongs to the bacterial ribosomal protein bL36 family.

The sequence is that of Large ribosomal subunit protein bL36 from Micrococcus luteus (strain ATCC 4698 / DSM 20030 / JCM 1464 / CCM 169 / CCUG 5858 / IAM 1056 / NBRC 3333 / NCIMB 9278 / NCTC 2665 / VKM Ac-2230) (Micrococcus lysodeikticus).